Reading from the N-terminus, the 398-residue chain is Phosphoglycerate kinase (398 aa).

Residues 23-25 (DFN), Arg38, 61-64 (HLGK), Arg122, and Arg155 each bind substrate. Residues Lys206, Gly297, Glu328, and 354 to 357 (GGDS) contribute to the ATP site.

It belongs to the phosphoglycerate kinase family. Monomer.

It is found in the cytoplasm. It catalyses the reaction (2R)-3-phosphoglycerate + ATP = (2R)-3-phospho-glyceroyl phosphate + ADP. The protein operates within carbohydrate degradation; glycolysis; pyruvate from D-glyceraldehyde 3-phosphate: step 2/5. This Clostridium novyi (strain NT) protein is Phosphoglycerate kinase.